The sequence spans 490 residues: Colicin-10 (490 aa).

Residues 1-20 (MDKVTDNSPDVESTESTEGS) show a composition bias toward polar residues. Disordered regions lie at residues 1 to 29 (MDKV…VDTG) and 146 to 171 (QKAR…EIAR). Residues 146–170 (QKAREEAEAAEKALREAERQRDEIA) show a composition bias toward basic and acidic residues. The helical transmembrane segment at 447 to 467 (IVALMFSFIVGAPLGFWGIAI) threads the bilayer.

Belongs to the channel forming colicin family.

It localises to the host membrane. Functionally, this colicin is a channel-forming colicin. This class of transmembrane toxins depolarize the cytoplasmic membrane, leading to dissipation of cellular energy. In terms of biological role, colicins are polypeptide toxins produced by and active against E.coli and closely related bacteria. The protein is Colicin-10 (cta) of Escherichia coli.